The following is a 256-amino-acid chain: Coiled-coil domain-containing protein 90B, mitochondrial (256 aa).

A mitochondrion-targeting transit peptide spans M1–S42. Positions A106–A164 form a coiled coil. Residues T231–W253 form a helical membrane-spanning segment.

Belongs to the CCDC90 family. Interacts with MCU.

It is found in the mitochondrion membrane. This chain is Coiled-coil domain-containing protein 90B, mitochondrial (Ccdc90b), found in Rattus norvegicus (Rat).